A 649-amino-acid chain; its full sequence is Epithelial sodium channel subunit gamma (649 aa).

The Cytoplasmic portion of the chain corresponds to 1-55; the sequence is MAPGEKIKAKIKKNLPVTGPQAPTIKELMRWYCLNTNTHGCRRIVVSRGRLRRLL. Residues 56-76 form a helical membrane-spanning segment; the sequence is WIGFTLTAVALILWQCALLVF. Over 77–541 the chain is Extracellular; it reads SFYTVSVSIK…GGQLGLWMSC (465 aa). 8 disulfides stabilise this stretch: cysteine 100–cysteine 283, cysteine 207–cysteine 214, cysteine 260–cysteine 267, cysteine 372–cysteine 457, cysteine 394–cysteine 453, cysteine 398–cysteine 449, cysteine 407–cysteine 434, and cysteine 409–cysteine 423. The interval 135-221 is gating release of inhibition by proteolysis (GRIP); protease-sensitive region that is responsible for the proteolytic activation of the channel; that stretch reads RKRREAESWN…SDCATYTFSS (87 aa). Asparagine 209 carries an N-linked (GlcNAc...) asparagine glycan. The N-linked (GlcNAc...) asparagine glycan is linked to asparagine 497. Residues 542-562 form a helical membrane-spanning segment; the sequence is SVVCVIEIIEVFFIDFFSIIA. The Cytoplasmic segment spans residues 563–649; the sequence is RRQWQKAKEW…LTDTQMLDEL (87 aa). The PY motif; recruits WW domain-containing proteins and is thereby required for ubiquitination and inhibition of the channel by NEDD4 and NEDD4L signature appears at 623 to 627; that stretch reads PPPKY.

It belongs to the amiloride-sensitive sodium channel (TC 1.A.6) family. SCNN1G subfamily. As to quaternary structure, component of the heterotrimeric epithelial sodium channel (ENaC) composed of an alpha/SCNN1A, a beta/SCNN1B and a gamma/SCNN1G subunit. An additional delta/SCNN1D subunit can replace the alpha/SCNN1A subunit to form an alternative channel with specific properties. Interacts with WWP1 (via WW domains). Interacts with WWP2 (via WW domains); inhibits the channel. Interacts with the full-length immature form of PCSK9 (pro-PCSK9); inhibits ENaC by promoting its proteasomal degradation. Interacts with BPIFA1; the interaction is indirect via SCNN1B and inhibits the proteolytic maturation of SCNN1A and SCNN1G and the activation of ENaC. In terms of processing, phosphorylated on serine and threonine residues. Aldosterone and insulin increase the basal level of phosphorylation. Ubiquitinated. Can be ubiquitinated at multiple sites and undergo monoubiquitination and polyubiquitination. Ubiquitination by NEDD4 or NEDD4L inhibits the ENaC channel through endocytosis, intracellular retention and degradation of its individual subunits. Post-translationally, ENaC is activated through the proteolytic maturation of its subunits. Furin cleaves the SCNN1G subunit first, followed by cleavage by prostasin (PRSS8), which results in a stepwise increase in the open probability of the channel due to the release of an inhibitory tract. BPIFA1, which is recruited by the SCNN1B subunit, prevents the proteolytic activation of ENaC. In terms of processing, N-glycosylated. N-linked glycans are processed to complex type during ENaC complex assembly and transport to the plasma membrane. As to expression, expressed in kidney (at protein level).

It is found in the apical cell membrane. The catalysed reaction is Na(+)(in) = Na(+)(out). Originally identified and characterized by its inhibition by the diuretic drug amiloride. In terms of biological role, this is one of the three pore-forming subunits of the heterotrimeric epithelial sodium channel (ENaC), a critical regulator of sodium balance and fluid homeostasis. ENaC operates in epithelial tissues, where it mediates the electrodiffusion of sodium ions from extracellular fluid through the apical membrane of cells, with water following osmotically. It plays a key role in maintaining sodium homeostasis through electrogenic sodium reabsorption in the kidneys. Additionally, ENaC is essential for airway surface liquid homeostasis, which is crucial for proper mucus clearance. In Homo sapiens (Human), this protein is Epithelial sodium channel subunit gamma.